Here is a 216-residue protein sequence, read N- to C-terminus: Probable GTP-binding protein EngB (216 aa).

The region spanning 24-205 is the EngB-type G domain; sequence ATPEIAFVGR…WARLAALAAE (182 aa). GTP-binding positions include 32–39, 59–63, 86–89, 153–156, and 184–186; these read GRSNVGKS, GRTRA, DLPG, TKTD, and FSA. Residues Ser39 and Thr61 each contribute to the Mg(2+) site.

It belongs to the TRAFAC class TrmE-Era-EngA-EngB-Septin-like GTPase superfamily. EngB GTPase family. Mg(2+) serves as cofactor.

Functionally, necessary for normal cell division and for the maintenance of normal septation. This chain is Probable GTP-binding protein EngB, found in Anaeromyxobacter dehalogenans (strain 2CP-C).